Consider the following 710-residue polypeptide: Integrator complex subunit 10 (710 aa).

Ser231, Ser381, and Ser382 each carry phosphoserine. Lys464 is covalently cross-linked (Glycyl lysine isopeptide (Lys-Gly) (interchain with G-Cter in SUMO2)).

It belongs to the Integrator subunit 10 family. In terms of assembly, component of the Integrator complex, composed of core subunits INTS1, INTS2, INTS3, INTS4, INTS5, INTS6, INTS7, INTS8, INTS9/RC74, INTS10, INTS11/CPSF3L, INTS12, INTS13, INTS14 and INTS15. The core complex associates with protein phosphatase 2A subunits PPP2CA and PPP2R1A, to form the Integrator-PP2A (INTAC) complex. INTS10 is part of the tail subcomplex, composed of INTS10, INTS13, INTS14 and INTS15.

It localises to the nucleus. In terms of biological role, component of the integrator complex, a multiprotein complex that terminates RNA polymerase II (Pol II) transcription in the promoter-proximal region of genes. The integrator complex provides a quality checkpoint during transcription elongation by driving premature transcription termination of transcripts that are unfavorably configured for transcriptional elongation: the complex terminates transcription by (1) catalyzing dephosphorylation of the C-terminal domain (CTD) of Pol II subunit POLR2A/RPB1 and SUPT5H/SPT5, (2) degrading the exiting nascent RNA transcript via endonuclease activity and (3) promoting the release of Pol II from bound DNA. The integrator complex is also involved in terminating the synthesis of non-coding Pol II transcripts, such as enhancer RNAs (eRNAs), small nuclear RNAs (snRNAs), telomerase RNAs and long non-coding RNAs (lncRNAs). Within the integrator complex, INTS10 is part of the integrator tail module that acts as a platform for the recruitment of transcription factors at promoters. May be not involved in the recruitment of cytoplasmic dynein to the nuclear envelope, probably as component of the integrator complex. This is Integrator complex subunit 10 from Homo sapiens (Human).